Consider the following 425-residue polypeptide: Inhibin beta A chain (425 aa).

The signal sequence occupies residues 1–20 (MPLLWLRGFLLASCWIIVRS). A propeptide spanning residues 21 to 309 (SPTPGSEGHS…EDHPHRRRRR (289 aa)) is cleaved from the precursor. N165 carries N-linked (GlcNAc...) asparagine glycosylation. The disordered stretch occupies residues 260-289 (KKRKEEEGEGKKRDGEGGAGGDEEKEQSHR). A compositionally biased stretch (basic and acidic residues) spans 263–275 (KEEEGEGKKRDGE). 4 cysteine pairs are disulfide-bonded: C313–C321, C320–C390, C349–C422, and C353–C424.

The protein belongs to the TGF-beta family. In terms of assembly, dimeric, linked by one or more disulfide bonds. Inhibin A is a dimer of alpha/INHA and beta-A/INHBA. Activin A is a homodimer of beta-A/INHBA. Activin AB is a dimer of beta-A/INHBA and beta-B/INHBB. Interacts with FST and FSTL3; these interactions prevent activin A interaction to its type II receptor. Activin A interacts with ACVR2A. Activin A interacts with BMPR2. Inhibin A interacts with ACVR1; this interaction creates a non-signaling complex (NSC) that inhibits ACVR1-mediated BMP signaling. Inhibin A interacts with ACVR2A.

The protein resides in the secreted. In terms of biological role, inhibins/activins are involved in regulating a number of diverse functions such as hypothalamic and pituitary hormone secretion, gonadal hormone secretion, germ cell development and maturation, erythroid differentiation, insulin secretion, nerve cell survival, embryonic axial development or bone growth, depending on their subunit composition. Its function is as follows. Activin A is a homodimer of INHBA that plays a role in several essential biological processes including embryonic development, stem cell maintenance and differentiation, haematopoiesis, cell proliferation and tissue fibrosis. Signals through type I (such as ACVR1B or ACVR1C) and type II receptors (such as ACVR2A, ACVR2B or BMPR2) which, upon ligand binding, phosphorylate SMAD2 and SMAD3 intracellular signaling mediators that form a complex with SMAD4, translocate to the nucleus and modulate gene expression. Can also activate alternative non-canonical intracellular signaling pathways including the p38 MAPK, extracellular signal-regulated kinases 1/2 (ERK1/2) and c-Jun N-terminal kinases (JNKs) to modulate cell migration and differentiation. Alternatively, promotes osteoblastic differentiation via ACVRL1-SMAD1/5/9 pathway. In addition, can engage the type I receptor ACVR1 to form an ACVR1-activin A-type II receptor non-signaling complex (NSC) that renders receptors unavailable for engagement with BMPs, hence resulting in an apparent inhibition of ACVR1-mediated BMP signaling. Inhibin A is a dimer of alpha/INHA and beta-A/INHBA that functions as a feedback regulator in the hypothalamic-pituitary-gonadal (HPG) axis. Inhibits the secretion of FSH from the anterior pituitary gland by acting on pituitary gonadotrope cells. Antagonizes activin A by binding to the proteoglycan, betaglycan, and forming a stable complex with and, thereby, sequestering type II activin receptors while excluding type I receptor. The sequence is that of Inhibin beta A chain (INHBA) from Ovis aries (Sheep).